Here is a 675-residue protein sequence, read N- to C-terminus: TOM1-like protein 9 (675 aa).

One can recognise a VHS domain in the interval 9 to 138; the sequence is ATSEMLIGPD…ELLRAGAVFP (130 aa). Disordered stretches follow at residues 144–181, 270–322, 371–524, 542–561, and 622–675; these read SAPV…EPEF, LPGT…QLAL, FSDN…YAQM, QNGV…GYQP, and RDQT…AGTM. In terms of domain architecture, GAT spans 180–268; that stretch reads EFPTLSLSEI…VLTNYEAIAS (89 aa). 2 stretches are compositionally biased toward polar residues: residues 299–317 and 372–435; these read GDSS…NGVL and SDNT…GQGV. Positions 436 to 451 are enriched in low complexity; sequence SSPWSSQPAQQPVQPS. Composition is skewed to polar residues over residues 470 to 481 and 488 to 524; these read QDYSPSAESGSP and PTQT…YAQM. Residues 646–661 show a composition bias toward basic and acidic residues; sequence NKPEDKLFGDLVDISK.

The protein belongs to the TOM1 family. In terms of assembly, interacts with ELC/VPS23A and ELCL/VPS23B. In terms of tissue distribution, ubiquitously expressed.

It localises to the cytoplasm. Its subcellular location is the membrane. In terms of biological role, might contribute to the loading of the ESCRT machinery. The protein is TOM1-like protein 9 of Arabidopsis thaliana (Mouse-ear cress).